Consider the following 389-residue polypeptide: 1-deoxy-D-xylulose 5-phosphate reductoisomerase (389 aa).

Positions 11, 12, 13, 14, 39, and 122 each coordinate NADPH. Lys-123 is a 1-deoxy-D-xylulose 5-phosphate binding site. Glu-124 serves as a coordination point for NADPH. Asp-148 provides a ligand contact to Mn(2+). Positions 149, 150, 174, and 197 each coordinate 1-deoxy-D-xylulose 5-phosphate. Glu-150 contributes to the Mn(2+) binding site. Gly-203 lines the NADPH pocket. Residues Ser-210, Asn-215, Lys-216, and Glu-219 each coordinate 1-deoxy-D-xylulose 5-phosphate. Residue Glu-219 coordinates Mn(2+).

Belongs to the DXR family. Mg(2+) serves as cofactor. Requires Mn(2+) as cofactor.

It carries out the reaction 2-C-methyl-D-erythritol 4-phosphate + NADP(+) = 1-deoxy-D-xylulose 5-phosphate + NADPH + H(+). It functions in the pathway isoprenoid biosynthesis; isopentenyl diphosphate biosynthesis via DXP pathway; isopentenyl diphosphate from 1-deoxy-D-xylulose 5-phosphate: step 1/6. Catalyzes the NADPH-dependent rearrangement and reduction of 1-deoxy-D-xylulose-5-phosphate (DXP) to 2-C-methyl-D-erythritol 4-phosphate (MEP). The sequence is that of 1-deoxy-D-xylulose 5-phosphate reductoisomerase from Leptospira interrogans serogroup Icterohaemorrhagiae serovar Lai (strain 56601).